Here is a 558-residue protein sequence, read N- to C-terminus: Arginine--tRNA ligase (558 aa).

The 'HIGH' region motif lies at 129–139 (ANPTGPLHVGH).

It belongs to the class-I aminoacyl-tRNA synthetase family. As to quaternary structure, monomer.

It localises to the cytoplasm. It catalyses the reaction tRNA(Arg) + L-arginine + ATP = L-arginyl-tRNA(Arg) + AMP + diphosphate. The chain is Arginine--tRNA ligase from Polaromonas naphthalenivorans (strain CJ2).